Here is a 369-residue protein sequence, read N- to C-terminus: Anhydro-N-acetylmuramic acid kinase (369 aa).

Gly-9–Asp-16 is an ATP binding site.

It belongs to the anhydro-N-acetylmuramic acid kinase family.

The catalysed reaction is 1,6-anhydro-N-acetyl-beta-muramate + ATP + H2O = N-acetyl-D-muramate 6-phosphate + ADP + H(+). It functions in the pathway amino-sugar metabolism; 1,6-anhydro-N-acetylmuramate degradation. Its pathway is cell wall biogenesis; peptidoglycan recycling. Catalyzes the specific phosphorylation of 1,6-anhydro-N-acetylmuramic acid (anhMurNAc) with the simultaneous cleavage of the 1,6-anhydro ring, generating MurNAc-6-P. Is required for the utilization of anhMurNAc either imported from the medium or derived from its own cell wall murein, and thus plays a role in cell wall recycling. The polypeptide is Anhydro-N-acetylmuramic acid kinase (Phenylobacterium zucineum (strain HLK1)).